Here is a 248-residue protein sequence, read N- to C-terminus: Killer cell lectin-like receptor subfamily I member 2 (248 aa).

The Cytoplasmic segment spans residues 1-79 (MHKKKHIKHG…GIDPWLTTWQ (79 aa)). The tract at residues 19–44 (IGTKSPTFQEKQRPSKTDQRSTVWRE) is disordered. The segment covering 28-44 (EKQRPSKTDQRSTVWRE) has biased composition (basic and acidic residues). A helical; Signal-anchor for type II membrane protein membrane pass occupies residues 80 to 100 (MITVILATLCIILVTKVGFLI). Over 101 to 248 (PSLFSKGEKQ…KKTYICEFNI (148 aa)) the chain is Extracellular. 3 disulfide bridges follow: cysteine 132–cysteine 145, cysteine 161–cysteine 244, and cysteine 223–cysteine 236. The region spanning 139-245 (FGNNFYCVFR…CSAKKTYICE (107 aa)) is the C-type lectin domain. N-linked (GlcNAc...) asparagine glycans are attached at residues asparagine 197, asparagine 214, and asparagine 220.

Heterodimer with KLRE1. Expressed in natural killer (NK) cells.

It localises to the cell membrane. Lectin-like receptor for natural killer (NK) cells. Heterodimer formation with KLRE1 mediates NK cell cytolytic activity. This chain is Killer cell lectin-like receptor subfamily I member 2, found in Mus musculus (Mouse).